Here is an 85-residue protein sequence, read N- to C-terminus: Probable oxaloacetate decarboxylase gamma chain (85 aa).

A helical membrane pass occupies residues 11–33 (AATLMVTGMAVVFIFLTILVYLV).

This sequence belongs to the OadG family. Heterotrimer of an alpha, a beta and a gamma subunit. Na(+) serves as cofactor.

It localises to the cell membrane. The catalysed reaction is oxaloacetate + 2 Na(+)(in) + H(+) = pyruvate + 2 Na(+)(out) + CO2. Catalyzes the decarboxylation of oxaloacetate coupled to Na(+) translocation. This chain is Probable oxaloacetate decarboxylase gamma chain, found in Vibrio parahaemolyticus serotype O3:K6 (strain RIMD 2210633).